We begin with the raw amino-acid sequence, 307 residues long: 4-hydroxybenzoate geranyltransferase 1 (307 aa).

8 helical membrane passes run 38 to 58 (PIGS…AADL), 62 to 82 (PKML…GCTI), 120 to 140 (LFIG…LAIV), 154 to 174 (ITYW…LLGS), 179 to 199 (GSVV…WTLV), 230 to 250 (MWIS…GLIL), 252 to 272 (IGLP…WQIF), and 286 to 306 (FVSN…GRLF).

This sequence belongs to the UbiA prenyltransferase family. It depends on Mg(2+) as a cofactor. Expressed only in roots.

The protein resides in the endoplasmic reticulum membrane. The catalysed reaction is 4-hydroxybenzoate + (2E)-geranyl diphosphate = 3-geranyl-4-hydroxybenzoate + diphosphate. Its function is as follows. Prenyltransferase involved in the biosynthesis of shikonin, a naphthoquinone secondary metabolite. Could accept only geranyl diphosphate and not dimethylallyl diphosphate, farnesyl diphosphate, or geranylgeranyl diphosphate as substrate. This is 4-hydroxybenzoate geranyltransferase 1 (PGT-1) from Lithospermum erythrorhizon (Purple gromwell).